Reading from the N-terminus, the 198-residue chain is FMN-dependent NADH:quinone oxidoreductase (198 aa).

Residue 92–95 coordinates FMN; sequence MWNL.

The protein belongs to the azoreductase type 1 family. In terms of assembly, homodimer. It depends on FMN as a cofactor.

It catalyses the reaction 2 a quinone + NADH + H(+) = 2 a 1,4-benzosemiquinone + NAD(+). The catalysed reaction is N,N-dimethyl-1,4-phenylenediamine + anthranilate + 2 NAD(+) = 2-(4-dimethylaminophenyl)diazenylbenzoate + 2 NADH + 2 H(+). Functionally, quinone reductase that provides resistance to thiol-specific stress caused by electrophilic quinones. Its function is as follows. Also exhibits azoreductase activity. Catalyzes the reductive cleavage of the azo bond in aromatic azo compounds to the corresponding amines. The chain is FMN-dependent NADH:quinone oxidoreductase from Clostridium beijerinckii (strain ATCC 51743 / NCIMB 8052) (Clostridium acetobutylicum).